The primary structure comprises 100 residues: Large ribosomal subunit protein uL23 (100 aa).

The protein belongs to the universal ribosomal protein uL23 family. Part of the 50S ribosomal subunit. Contacts protein L29, and trigger factor when it is bound to the ribosome.

Its function is as follows. One of the early assembly proteins it binds 23S rRNA. One of the proteins that surrounds the polypeptide exit tunnel on the outside of the ribosome. Forms the main docking site for trigger factor binding to the ribosome. The polypeptide is Large ribosomal subunit protein uL23 (Mycolicibacterium paratuberculosis (strain ATCC BAA-968 / K-10) (Mycobacterium paratuberculosis)).